The sequence spans 510 residues: Probable cytosol aminopeptidase (510 aa).

Positions 272 and 277 each coordinate Mn(2+). Lys284 is an active-site residue. Mn(2+) contacts are provided by Asp296, Asp355, and Glu357. Arg359 is an active-site residue.

This sequence belongs to the peptidase M17 family. Mn(2+) serves as cofactor.

The protein localises to the cytoplasm. The enzyme catalyses Release of an N-terminal amino acid, Xaa-|-Yaa-, in which Xaa is preferably Leu, but may be other amino acids including Pro although not Arg or Lys, and Yaa may be Pro. Amino acid amides and methyl esters are also readily hydrolyzed, but rates on arylamides are exceedingly low.. It catalyses the reaction Release of an N-terminal amino acid, preferentially leucine, but not glutamic or aspartic acids.. Functionally, presumably involved in the processing and regular turnover of intracellular proteins. Catalyzes the removal of unsubstituted N-terminal amino acids from various peptides. The protein is Probable cytosol aminopeptidase of Synechococcus sp. (strain JA-3-3Ab) (Cyanobacteria bacterium Yellowstone A-Prime).